The following is a 500-amino-acid chain: ATP synthase subunit beta (500 aa).

Position 155 to 162 (155 to 162 (GGAGVGKT)) interacts with ATP.

This sequence belongs to the ATPase alpha/beta chains family. As to quaternary structure, F-type ATPases have 2 components, CF(1) - the catalytic core - and CF(0) - the membrane proton channel. CF(1) has five subunits: alpha(3), beta(3), gamma(1), delta(1), epsilon(1). CF(0) has three main subunits: a(1), b(2) and c(9-12). The alpha and beta chains form an alternating ring which encloses part of the gamma chain. CF(1) is attached to CF(0) by a central stalk formed by the gamma and epsilon chains, while a peripheral stalk is formed by the delta and b chains.

It localises to the cell inner membrane. The catalysed reaction is ATP + H2O + 4 H(+)(in) = ADP + phosphate + 5 H(+)(out). In terms of biological role, produces ATP from ADP in the presence of a proton gradient across the membrane. The catalytic sites are hosted primarily by the beta subunits. This chain is ATP synthase subunit beta, found in Azobacteroides pseudotrichonymphae genomovar. CFP2.